The chain runs to 3036 residues: DmX-like protein 2 (3036 aa).

WD repeat units follow at residues 108–145 (FLSSVTYNLAWDPQDNRLLTATDSIQLWAPPGDDILEE), 167–207 (KTSV…KSSI), and 230–278 (AHPR…EDCL). A Phosphoserine modification is found at Ser326. The interval 417–480 (KQVDHENDDA…EGSPRTYSRL (64 aa)) is disordered. Acidic residues predominate over residues 422–434 (ENDDADREDEEHS). Over residues 435–473 (QEDRERGLHMKLDHDLSLDRESEAGTGSSEHEDGEREGS) the composition is skewed to basic and acidic residues. A Phosphoserine modification is found at Ser473. A WD 4 repeat occupies 492–532 (DRKIETLLTEWNKNPDMLFTIHPVDGTFLVWHVKYLDEYNP). A Phosphoserine modification is found at Ser588. WD repeat units lie at residues 595-634 (HSRSHSTHMNILAPTVMMISKHIDGSLNQWAVTFADKSAF), 751-803 (LHTS…RKLL), and 878-920 (QPSQ…VQAC). Residues 932–959 (SLLSVPGQKNVDSSPETSPSVSPMPHSS) form a disordered region. 2 positions are modified to phosphoserine: Ser944 and Ser945. A compositionally biased stretch (low complexity) spans 949–959 (SPSVSPMPHSS). The stretch at 1000–1037 (LSSSSIYPVCLAPYLVVTTCSDNKVRFWKCCMEANPEC) is one WD 8 repeat. A phosphoserine mark is found at Ser1140, Ser1143, and Ser1151. WD repeat units lie at residues 1163 to 1204 (PNIK…VTEQ) and 1244 to 1281 (GTPSLPVSLSWVRDGILVVGMDCEMHVYAQWKHAVKFG). Residues Ser1287 and Ser1400 each carry the phosphoserine modification. At Thr1417 the chain carries Phosphothreonine. Phosphoserine is present on Ser1857. Residues 1927 to 1936 (ISHRMDDVPS) show a composition bias toward basic and acidic residues. The disordered stretch occupies residues 1927–1952 (ISHRMDDVPSHSKALSDGNGSSGIEW). At Ser1984 the chain carries Phosphoserine. Residues 1999–2033 (KSTDAREKDKQSDQKASDPNMLLTPQEEDDPEGDT) form a disordered region. The segment covering 2001-2014 (TDAREKDKQSDQKA) has biased composition (basic and acidic residues). Phosphothreonine is present on Thr2022. A compositionally biased stretch (acidic residues) spans 2024 to 2033 (QEEDDPEGDT). A coiled-coil region spans residues 2122-2153 (GSYERHQIERRRLQAKREHAERRKSWLQKNQD). A phosphoserine mark is found at Ser2399 and Ser2640. WD repeat units lie at residues 2761–2800 (RNLHNVKRMTSHPVHQYYLTGAQDGSVRMFEWTRPQQLVC), 2804–2843 (AGNARVTRLYFNSQGNKCGVADGEGFLSIWQVNQTASNPK), 2850–2892 (CHSK…GNSL), 2898–2937 (CHDHGATVLQYAPKQQLLISGGRKGHVCIFDIRQRQLIHT), 2940–2979 (AHDSAIKALALDPYEEYFTTGSAEGNIKVWRLTGHGLIHS), and 2992–3030 (NIGAGVMQIDIIQGNRLFSCGADGTLKTRVLPNAFNIPN).

In terms of assembly, interacts with MADD and RAB3GAP.

Its subcellular location is the cytoplasmic vesicle. It is found in the secretory vesicle. It localises to the synaptic vesicle membrane. The protein resides in the neuronal dense core vesicle. In terms of biological role, may serve as a scaffold protein for MADD and RAB3GA on synaptic vesicles. Plays a role in the brain as a key controller of neuronal and endocrine homeostatic processes. The sequence is that of DmX-like protein 2 (DMXL2) from Homo sapiens (Human).